The primary structure comprises 162 residues: uncharacterized protein (162 aa).

This sequence belongs to the baculoviridae 19 kDa protein family.

This is an uncharacterized protein from Tortricidae (ClGV).